A 608-amino-acid chain; its full sequence is uncharacterized protein (608 aa).

A signal peptide spans 1 to 38; that stretch reads MWLQQRLKVFPGLLSSSWARRVLAVSGFLVIIYWYIFS. The Extracellular portion of the chain corresponds to 39–563; it reads GSLFRSFWYA…EEHMAKQYRG (525 aa). Residue Asn337 is glycosylated (N-linked (GlcNAc...) asparagine). A helical membrane pass occupies residues 564 to 584; it reads LPFLFWFSVASLITLFHLFLF. Residues 585-608 are Cytoplasmic-facing; the sequence is KLIYNEYCGPGAKPLFRSKEDTSV.

It localises to the membrane. This is an uncharacterized protein from Xenopus tropicalis (Western clawed frog).